A 60-amino-acid chain; its full sequence is UPF0434 protein Vapar_2640 (60 aa).

This sequence belongs to the UPF0434 family.

This is UPF0434 protein Vapar_2640 from Variovorax paradoxus (strain S110).